Here is a 32-residue protein sequence, read N- to C-terminus: MSDIN-like toxin proprotein 1 (32 aa).

Residues 1–10 constitute a propeptide that is removed on maturation; that stretch reads MSDINATCLP. Residues 11–17 constitute a cross-link (cyclopeptide (Ala-Pro)); sequence AWLALCP. Positions 18 to 32 are excised as a propeptide; the sequence is CVGDDVNPTLTRGGT.

The protein belongs to the MSDIN fungal toxin family. Post-translationally, processed by the macrocyclase-peptidase enzyme POPB to yield a toxic cyclic heptapeptide. POPB first removes 10 residues from the N-terminus. Conformational trapping of the remaining peptide forces the enzyme to release this intermediate rather than proceed to macrocyclization. The enzyme rebinds the remaining peptide in a different conformation and catalyzes macrocyclization of the N-terminal 7 residues.

Functionally, probable toxin that belongs to the MSDIN-like toxin family responsible for a large number of food poisoning cases and deaths. The polypeptide is MSDIN-like toxin proprotein 1 (Amanita fuligineoides).